A 214-amino-acid chain; its full sequence is Adenylate kinase (214 aa).

Residue 10 to 15 (GAGKGT) coordinates ATP. The segment at 30–59 (STGDMLRAAVKAGTPLGVKAQEIMIQGGLV) is NMP. AMP-binding positions include T31, R36, 57–59 (GLV), 85–88 (GFPR), and Q92. The segment at 126-163 (GRRSCSSCGKGYHLVFDPPLRAGVCDVCGSGLVQRADD) is LID. R127 is an ATP binding site. Residues C130, C133, C150, and C153 each contribute to the Zn(2+) site. The AMP site is built by R160 and R171. Position 199 (G199) interacts with ATP.

It belongs to the adenylate kinase family. In terms of assembly, monomer.

It localises to the cytoplasm. It catalyses the reaction AMP + ATP = 2 ADP. It participates in purine metabolism; AMP biosynthesis via salvage pathway; AMP from ADP: step 1/1. Functionally, catalyzes the reversible transfer of the terminal phosphate group between ATP and AMP. Plays an important role in cellular energy homeostasis and in adenine nucleotide metabolism. The chain is Adenylate kinase from Trichlorobacter lovleyi (strain ATCC BAA-1151 / DSM 17278 / SZ) (Geobacter lovleyi).